Consider the following 703-residue polypeptide: tRNA 5-methylaminomethyl-2-thiouridine biosynthesis bifunctional protein MnmC (703 aa).

A tRNA (mnm(5)s(2)U34)-methyltransferase region spans residues 1 to 281 (MTAKPQKSCQ…KPAALVAKDH (281 aa)). An FAD-dependent cmnm(5)s(2)U34 oxidoreductase region spans residues 286–703 (VGGGLASANL…LRKLLKGKAL (418 aa)).

The protein in the N-terminal section; belongs to the methyltransferase superfamily. tRNA (mnm(5)s(2)U34)-methyltransferase family. In the C-terminal section; belongs to the DAO family. Requires FAD as cofactor.

It localises to the cytoplasm. It catalyses the reaction 5-aminomethyl-2-thiouridine(34) in tRNA + S-adenosyl-L-methionine = 5-methylaminomethyl-2-thiouridine(34) in tRNA + S-adenosyl-L-homocysteine + H(+). Functionally, catalyzes the last two steps in the biosynthesis of 5-methylaminomethyl-2-thiouridine (mnm(5)s(2)U) at the wobble position (U34) in tRNA. Catalyzes the FAD-dependent demodification of cmnm(5)s(2)U34 to nm(5)s(2)U34, followed by the transfer of a methyl group from S-adenosyl-L-methionine to nm(5)s(2)U34, to form mnm(5)s(2)U34. The chain is tRNA 5-methylaminomethyl-2-thiouridine biosynthesis bifunctional protein MnmC from Shewanella sp. (strain MR-7).